The chain runs to 609 residues: UvrABC system protein C (609 aa).

Residues Ser16–Val94 form the GIY-YIG domain. A UVR domain is found at Lys203–Val238.

The protein belongs to the UvrC family. In terms of assembly, interacts with UvrB in an incision complex.

The protein resides in the cytoplasm. Functionally, the UvrABC repair system catalyzes the recognition and processing of DNA lesions. UvrC both incises the 5' and 3' sides of the lesion. The N-terminal half is responsible for the 3' incision and the C-terminal half is responsible for the 5' incision. This chain is UvrABC system protein C, found in Shewanella sp. (strain ANA-3).